Here is a 505-residue protein sequence, read N- to C-terminus: Trans-cinnamate 4-monooxygenase (505 aa).

A helical transmembrane segment spans residues 3–23; it reads LLLVEKTLLALFAAIIASIFI. (E)-cinnamate contacts are provided by residues 213-218 and A306; that span reads RSRLAQ. C447 serves as a coordination point for heme.

It belongs to the cytochrome P450 family. It depends on heme as a cofactor.

The protein resides in the membrane. The catalysed reaction is (E)-cinnamate + reduced [NADPH--hemoprotein reductase] + O2 = (E)-4-coumarate + oxidized [NADPH--hemoprotein reductase] + H2O + H(+). It participates in phenylpropanoid metabolism; trans-4-coumarate biosynthesis; trans-4-coumarate from trans-cinnamate: step 1/1. In terms of biological role, catalyzes the first oxidative step of the phenylpropanoid pathway in higher plants by transforming trans-cinnamate into p-coumarate. The compounds formed by this pathway are essential components for lignification, pollination, and defense against ultraviolet light, predators and pathogens. This chain is Trans-cinnamate 4-monooxygenase (CYP73A12), found in Zinnia elegans (Garden zinnia).